The primary structure comprises 250 residues: Iron-sulfur assembly protein 1 (250 aa).

The segment at 54–89 (AADSVSPDSQRPGKKPFKFIVSNQSKSSKASKSPKW) is disordered. A compositionally biased stretch (low complexity) spans 75–89 (SNQSKSSKASKSPKW). Positions 178, 242, and 244 each coordinate Fe cation.

Belongs to the HesB/IscA family.

It localises to the mitochondrion matrix. Functionally, involved in the assembly of mitochondrial and cytoplasmic iron-sulfur proteins. Probably involved in the binding of an intermediate of Fe/S cluster assembly. The polypeptide is Iron-sulfur assembly protein 1 (ISA1) (Saccharomyces cerevisiae (strain ATCC 204508 / S288c) (Baker's yeast)).